A 418-amino-acid polypeptide reads, in one-letter code: Vasopressin V1a receptor (418 aa).

The segment covering 1–15 (MRFSGSPSPGPSNSS) has biased composition (low complexity). The interval 1 to 20 (MRFSGSPSPGPSNSSRWWPL) is disordered. Over 1–51 (MRFSGSPSPGPSNSSRWWPLDAGDANTSGDLAGLGEDGGPQADTRNEELAK) the chain is Extracellular. 2 N-linked (GlcNAc...) asparagine glycosylation sites follow: asparagine 13 and asparagine 26. Residues 52–75 (LEIAVLAVIFVVAVLGNSSVLLAL) traverse the membrane as a helical segment. Residues 76-87 (HRTPRKTSRMHL) lie on the Cytoplasmic side of the membrane. The chain crosses the membrane as a helical span at residues 88-109 (FIRHLSLADLAVAFFQVLPQLG). The Extracellular segment spans residues 110–124 (WDITYRFRGPDGLCR). Cysteine 123 and cysteine 202 are joined by a disulfide. A helical transmembrane segment spans residues 125-146 (VVKHMQVFAMFASAYMLVVMTA). Topologically, residues 147-167 (DRYIAVCHPLKTLQQPARRSR) are cytoplasmic. The helical transmembrane segment at 168 to 189 (LMIAAAWVLSFVLSTPQYFVFS) threads the bilayer. The Extracellular portion of the chain corresponds to 190-217 (MVEVSNVTKTYDCWANFIHPWGLPAYVT). The N-linked (GlcNAc...) asparagine glycan is linked to asparagine 195. The chain crosses the membrane as a helical span at residues 218-238 (WMTGSVFVAPVVILGTCYGFI). Over 239-293 (CYHIWRKVRGKTAGRQGGPAEGAGESALYRGVLHARCVSSVKTISRAKIRTVKMT) the chain is Cytoplasmic. A helical transmembrane segment spans residues 294–313 (FVIVTAYIVCWAPFFIIQMW). Residues 314 to 331 (SAWDKNFSWVESENPATA) are Extracellular-facing. Residue asparagine 319 is glycosylated (N-linked (GlcNAc...) asparagine). A helical membrane pass occupies residues 332–351 (IPALLASLNSCCNPWIYMFF). At 352-418 (SGHLLQDCAQ…KSIKFIPVST (67 aa)) the chain is on the cytoplasmic side. S-palmitoyl cysteine attachment occurs at residues cysteine 365 and cysteine 366. Residues 377–418 (GSDSMSRRQTSFTNNRSPTNSMGTWKDSPKSSKSIKFIPVST) form a disordered region. A compositionally biased stretch (polar residues) spans 383–399 (RRQTSFTNNRSPTNSMG). At serine 404 the chain carries Phosphoserine.

It belongs to the G-protein coupled receptor 1 family. Vasopressin/oxytocin receptor subfamily.

The protein localises to the cell membrane. Functionally, receptor for arginine vasopressin. The activity of this receptor is mediated by G proteins which activate a phosphatidyl-inositol-calcium second messenger system. This is Vasopressin V1a receptor (AVPR1A) from Ovis aries (Sheep).